The chain runs to 476 residues: 3-isopropylmalate dehydratase large subunit (476 aa).

Residues Cys347, Cys407, and Cys410 each coordinate [4Fe-4S] cluster. The interval 418–442 (LAPGERSASTSNRNFEGRQGKGGRT) is disordered.

Belongs to the aconitase/IPM isomerase family. LeuC type 1 subfamily. As to quaternary structure, heterodimer of LeuC and LeuD. The cofactor is [4Fe-4S] cluster.

The enzyme catalyses (2R,3S)-3-isopropylmalate = (2S)-2-isopropylmalate. It functions in the pathway amino-acid biosynthesis; L-leucine biosynthesis; L-leucine from 3-methyl-2-oxobutanoate: step 2/4. Its function is as follows. Catalyzes the isomerization between 2-isopropylmalate and 3-isopropylmalate, via the formation of 2-isopropylmaleate. This is 3-isopropylmalate dehydratase large subunit from Streptomyces coelicolor (strain ATCC BAA-471 / A3(2) / M145).